We begin with the raw amino-acid sequence, 101 residues long: Urease subunit beta (101 aa).

This sequence belongs to the urease beta subunit family. As to quaternary structure, heterotrimer of UreA (gamma), UreB (beta) and UreC (alpha) subunits. Three heterotrimers associate to form the active enzyme.

It is found in the cytoplasm. It carries out the reaction urea + 2 H2O + H(+) = hydrogencarbonate + 2 NH4(+). The protein operates within nitrogen metabolism; urea degradation; CO(2) and NH(3) from urea (urease route): step 1/1. In Pseudomonas syringae pv. syringae (strain B728a), this protein is Urease subunit beta.